We begin with the raw amino-acid sequence, 489 residues long: Sphingolipid C9-methyltransferase (489 aa).

2 helical membrane passes run 29-49 and 59-79; these read GAKNFSNWLLLGLLTGVPLFV and TFIFFFILFAIPILMAYWTVL. Residues 202-203, 239-247, 265-270, and 295-296 contribute to the S-adenosyl-L-methionine site; these read YT, LLDLGCGWG, TLGKNQ, and YR.

This sequence belongs to the CFA/CMAS family.

The protein localises to the membrane. It catalyses the reaction a (4E,8E)-4-sphinga-4,8-dienine ceramide + S-adenosyl-L-methionine = a 9-methyl-(4E,8E)-sphinga-4,8-dienine ceramide + S-adenosyl-L-homocysteine + H(+). It participates in lipid metabolism; sphingolipid metabolism. Functionally, catalyzes methylation of the sphingoid base component of glucosylceramides (GluCers) at the C9-position. Sphingolipid C9-methylation requires 4,8-desaturated ceramides as substrates. Glucosylceramides play important roles in growth, differentiation and pathogenicity. The methyl group at the C9-position distinguishes fungal glucosylceramides from those of plants and animals, and may thus play a role in host-pathogen interactions enabling the host to recognize the fungal attack and initiate specific defense responses. In Komagataella phaffii (strain GS115 / ATCC 20864) (Yeast), this protein is Sphingolipid C9-methyltransferase.